The sequence spans 201 residues: LexA repressor (201 aa).

Positions 27 to 47 (RMEISSAFGFASPNAAEDHLK) form a DNA-binding region, H-T-H motif. Catalysis depends on for autocatalytic cleavage activity residues Ser116 and Lys153.

It belongs to the peptidase S24 family. In terms of assembly, homodimer.

The enzyme catalyses Hydrolysis of Ala-|-Gly bond in repressor LexA.. Its function is as follows. Represses a number of genes involved in the response to DNA damage (SOS response), including recA and lexA. In the presence of single-stranded DNA, RecA interacts with LexA causing an autocatalytic cleavage which disrupts the DNA-binding part of LexA, leading to derepression of the SOS regulon and eventually DNA repair. This Dechloromonas aromatica (strain RCB) protein is LexA repressor.